An 815-amino-acid chain; its full sequence is uncharacterized protein (815 aa).

Positions 31–57 (CDMCRRKKIKCDGLRPCKNCKAGKLEC) form a DNA-binding region, zn(2)-C6 fungal-type. The chain crosses the membrane as a helical span at residues 560 to 580 (YWTTVYCGFSTIVTLIFAALL). Disordered stretches follow at residues 646-668 (ESNV…SNTQ) and 769-792 (DPDV…FNPT). Positions 780-792 (SSSLNNSTPFNPT) are enriched in polar residues.

The protein localises to the cytoplasm. The protein resides in the nucleus membrane. This is an uncharacterized protein from Schizosaccharomyces pombe (strain 972 / ATCC 24843) (Fission yeast).